We begin with the raw amino-acid sequence, 162 residues long: ATP synthase subunit b (162 aa).

Residues 6 to 26 (PDIGLLFWMLLSFGIVFFVAA) traverse the membrane as a helical segment.

The protein belongs to the ATPase B chain family. In terms of assembly, F-type ATPases have 2 components, F(1) - the catalytic core - and F(0) - the membrane proton channel. F(1) has five subunits: alpha(3), beta(3), gamma(1), delta(1), epsilon(1). F(0) has three main subunits: a(1), b(2) and c(10-14). The alpha and beta chains form an alternating ring which encloses part of the gamma chain. F(1) is attached to F(0) by a central stalk formed by the gamma and epsilon chains, while a peripheral stalk is formed by the delta and b chains.

It localises to the cell inner membrane. In terms of biological role, f(1)F(0) ATP synthase produces ATP from ADP in the presence of a proton or sodium gradient. F-type ATPases consist of two structural domains, F(1) containing the extramembraneous catalytic core and F(0) containing the membrane proton channel, linked together by a central stalk and a peripheral stalk. During catalysis, ATP synthesis in the catalytic domain of F(1) is coupled via a rotary mechanism of the central stalk subunits to proton translocation. Component of the F(0) channel, it forms part of the peripheral stalk, linking F(1) to F(0). The protein is ATP synthase subunit b of Azobacteroides pseudotrichonymphae genomovar. CFP2.